The chain runs to 398 residues: Fatty-acid-binding protein 2 (398 aa).

Residues R222, Y235, and S302 each coordinate dodecanoate.

Belongs to the chalcone isomerase family. In terms of tissue distribution, expressed in developing cotyledons, young seedlings, roots, seeds, embryos, macrospores, preanthesis and tapetum. Restricted to developing and reproductive tissues.

It is found in the plastid. It localises to the chloroplast stroma. Its function is as follows. Fatty-acid-binding protein. Associates with saturated fatty acid. The chain is Fatty-acid-binding protein 2 (FAP2) from Arabidopsis thaliana (Mouse-ear cress).